A 211-amino-acid polypeptide reads, in one-letter code: Large ribosomal subunit protein bL17c (211 aa).

The N-terminal 95 residues, 1 to 95, are a transit peptide targeting the chloroplast; the sequence is MAIPMSMAMA…IVDGGGRIYA (95 aa).

The protein belongs to the bacterial ribosomal protein bL17 family. As to quaternary structure, part of the 50S ribosomal subunit.

It is found in the plastid. The protein resides in the chloroplast. This protein binds directly to 23S ribosomal RNA. This chain is Large ribosomal subunit protein bL17c (RPL17), found in Arabidopsis thaliana (Mouse-ear cress).